The primary structure comprises 572 residues: MQQVIPAPRVQVTQPYAGQKPGTSGLRKKVSEATQPNYLENFVQSIFNTLRKDELKPKNVLFVGGDGRYFNRQAIFSIIRLAYANDISEVHVGQAGLMSTPASSHYIRKVNEEVGNCIGGIILTASHNPGGKEHGDFGIKFNVRTGAPAPEDFTDQIYTHTTKIKEYLTVDYEFEKHINLDQIGVYKFEGTRLEKSHFEVKVVDTVQDYTQLMQKLFDFDLLKGLFSNKDFSFRFDGMHGVAGPYAKHIFGTLLGCSKESLLNCDPSEDFGGGHPDPNLTYAHDLVELLDIHKKKDVGTVPQFGAACDGDADRNMILGRQFFVTPSDSLAVIAANANLIFKNGLLGAARSMPTSGALDKVAAKNGIKLFETPTGWKFFGNLMDAGLINLCGEESFGTGSNHIREKDGIWAVLAWLTILAHKNKNTDHFVTVEEIVTQYWQQFGRNYYSRYDYEQVDSAGANKMMEHLKTKFQYFEQLKQGNKADIYDYVDPVDQSVSKNQGVRFVFGDGSRIIFRLSGTGSVGATIRIYFEQFEQQQIQHETATALANIIKLGLEISDIAQFTGRNEPTVIT.

Substrate is bound by residues Thr-23, Arg-27, 126-127, and Lys-140; that span reads SH. The Phosphoserine intermediate role is filled by Ser-126. Mg(2+) is bound at residue Ser-126. Residues Asp-308, Asp-310, and Asp-312 each coordinate Mg(2+). Residues 312–313, Thr-373, 392–394, Lys-405, and Arg-527 each bind substrate; these read DR and EES.

The protein belongs to the phosphohexose mutase family. It depends on Mg(2+) as a cofactor. Post-translationally, phosphorylated via a calcium-dependent protein kinase. Very rapidly (within 80 ms) dephosphorylated during triggered trichocyst exocytosis. O-glycosylated with a short chain of mannose residues.

The protein localises to the cytoplasm. It catalyses the reaction alpha-D-glucose 1-phosphate = alpha-D-glucose 6-phosphate. In terms of biological role, may be involved in membrane fusion in exocytosis. This chain is Phosphoglucomutase-1 (pp63-1), found in Paramecium tetraurelia.